We begin with the raw amino-acid sequence, 384 residues long: Sialyltransferase-like protein 3 (384 aa).

Topologically, residues 1 to 5 (MKRRH) are cytoplasmic. Residues 6–26 (WSHPSCGLLLLVAVFCLLLVF) traverse the membrane as a helical; Signal-anchor for type II membrane protein segment. Residues 27 to 384 (RCSQLRHSGD…FRLPPVSFYR (358 aa)) are Lumenal-facing. An N-linked (GlcNAc...) asparagine glycan is attached at N241.

This sequence belongs to the glycosyltransferase 29 family.

Its subcellular location is the golgi apparatus membrane. Its function is as follows. Possesses sialyltransferase-like activity in vitro. Transfers sialic acid to the glycoprotein asialofetuin. The transferred sialic acid is linked to galactose of Gal-beta-1,3-GalNAc through alpha-2,6-linkage. The chain is Sialyltransferase-like protein 3 from Oryza sativa subsp. japonica (Rice).